Here is a 453-residue protein sequence, read N- to C-terminus: Glutamyl-tRNA reductase (453 aa).

Substrate-binding positions include 54–57, Ser113, 118–120, and Gln124; these read TCNR and EAQ. The Nucleophile role is filled by Cys55. 193–198 provides a ligand contact to NADP(+); that stretch reads GGGEVS.

The protein belongs to the glutamyl-tRNA reductase family. In terms of assembly, homodimer.

The catalysed reaction is (S)-4-amino-5-oxopentanoate + tRNA(Glu) + NADP(+) = L-glutamyl-tRNA(Glu) + NADPH + H(+). It participates in porphyrin-containing compound metabolism; protoporphyrin-IX biosynthesis; 5-aminolevulinate from L-glutamyl-tRNA(Glu): step 1/2. It functions in the pathway porphyrin-containing compound metabolism; chlorophyll biosynthesis. Its function is as follows. Catalyzes the NADPH-dependent reduction of glutamyl-tRNA(Glu) to glutamate 1-semialdehyde (GSA). In Chloroflexus aggregans (strain MD-66 / DSM 9485), this protein is Glutamyl-tRNA reductase.